An 82-amino-acid polypeptide reads, in one-letter code: Putative membrane protein insertion efficiency factor (82 aa).

It belongs to the UPF0161 family.

It is found in the cell inner membrane. Could be involved in insertion of integral membrane proteins into the membrane. The chain is Putative membrane protein insertion efficiency factor from Synechococcus elongatus (strain ATCC 33912 / PCC 7942 / FACHB-805) (Anacystis nidulans R2).